A 404-amino-acid chain; its full sequence is Glycerol-1-phosphate dehydrogenase [NAD(P)+] (404 aa).

NAD(+)-binding positions include D55, 117–121, and 139–142; these read GTVHD and TAPS. Substrate is bound at residue D144. An NAD(+)-binding site is contributed by S148. D191 is a binding site for substrate. Residues D191 and H271 each coordinate Ni(2+). Residue H275 participates in substrate binding. A Ni(2+)-binding site is contributed by H291.

This sequence belongs to the glycerol-1-phosphate dehydrogenase family. Homodimer. The cofactor is Ni(2+).

It localises to the cytoplasm. The catalysed reaction is sn-glycerol 1-phosphate + NAD(+) = dihydroxyacetone phosphate + NADH + H(+). The enzyme catalyses sn-glycerol 1-phosphate + NADP(+) = dihydroxyacetone phosphate + NADPH + H(+). Functionally, catalyzes the NAD(P)H-dependent reduction of dihydroxyacetonephosphate (DHAP or glycerone phosphate) to glycerol 1-phosphate (G1P). The G1P thus generated is probably used for the synthesis of phosphoglycerolipids in Gram-positive bacterial species. The chain is Glycerol-1-phosphate dehydrogenase [NAD(P)+] from Geobacillus thermodenitrificans (strain NG80-2).